A 532-amino-acid chain; its full sequence is Exodeoxyribonuclease 7 large subunit (532 aa).

The disordered stretch occupies residues 497 to 532; the sequence is AITTGEGTPAPETAAAPKKKPAKPASSDPGNQGNLF. Over residues 499-512 the composition is skewed to low complexity; the sequence is TTGEGTPAPETAAA.

The protein belongs to the XseA family. Heterooligomer composed of large and small subunits.

The protein localises to the cytoplasm. It catalyses the reaction Exonucleolytic cleavage in either 5'- to 3'- or 3'- to 5'-direction to yield nucleoside 5'-phosphates.. Its function is as follows. Bidirectionally degrades single-stranded DNA into large acid-insoluble oligonucleotides, which are then degraded further into small acid-soluble oligonucleotides. The chain is Exodeoxyribonuclease 7 large subunit from Agrobacterium fabrum (strain C58 / ATCC 33970) (Agrobacterium tumefaciens (strain C58)).